The chain runs to 1558 residues: Arginine-glutamic acid dipeptide repeats protein (1558 aa).

Positions 1–36 are enriched in basic and acidic residues; sequence MTADKDKDKDKEKDRDRDRDRERDKRDKARESENAR. The tract at residues 1 to 90 is disordered; the sequence is MTADKDKDKD…KKKSRYERTD (90 aa). 2 positions are modified to phosphoserine: serine 53 and serine 56. Basic residues predominate over residues 74 to 85; that stretch reads KSRKKPPKKKSR. In terms of domain architecture, BAH spans 103–283; it reads VVYRPGDCVY…PETRRLNSTQ (181 aa). Position 120 is a phosphothreonine (threonine 120). Phosphoserine is present on residues serine 142 and serine 304. The ELM2 domain maps to 284 to 387; it reads GEIRVGPSHQ…KALQRLVKKP (104 aa). In terms of domain architecture, SANT spans 391 to 443; sequence LIEKCWTEDEVKRFVKGLRQYGKNFFRIRKELLPSKETGELITFYYYWKKTPE. A disordered region spans residues 464–495; sequence TRTASTPVNTPSRPPSSEFLDLSSASEDDFDS. The segment covering 465–474 has biased composition (polar residues); it reads RTASTPVNTP. Positions 479–488 are enriched in low complexity; sequence SSEFLDLSSA. Residues 507-532 form a GATA-type zinc finger; sequence CRHCFTTTSKDWHHGGRENILLCTDC. Residues 542–1125 are disordered; sequence LPPIEKPVDP…PSHASQSARF (584 aa). Residue lysine 560 forms a Glycyl lysine isopeptide (Lys-Gly) (interchain with G-Cter in SUMO2) linkage. Position 593 is a phosphothreonine (threonine 593). Phosphoserine is present on residues serine 594, serine 600, and serine 613. Residues 609–623 show a composition bias toward low complexity; the sequence is SGRNSPSAASTSSND. Over residues 624-640 the composition is skewed to basic and acidic residues; that stretch reads SKAETVKKSAKKVKEEA. Lysine 637 is covalently cross-linked (Glycyl lysine isopeptide (Lys-Gly) (interchain with G-Cter in SUMO2)). Phosphoserine occurs at positions 642, 656, 675, and 679. Positions 652 to 673 are enriched in basic and acidic residues; it reads EKVASDTEDTDRITSKKTKTQE. The span at 688-708 shows a compositional bias: basic and acidic residues; the sequence is SDSRSVNDEGSSDPKDIDQDN. A compositionally biased stretch (polar residues) spans 709–720; it reads RSTSPSIPSPQD. Positions 726–752 are enriched in low complexity; it reads DSSAQQQMLQAQPPALQAPSGAASAPS. Residues 778–792 are compositionally biased toward polar residues; the sequence is SPATSQPPNQTQSTV. Pro residues predominate over residues 806-823; the sequence is LHPPRLPSPHPPLQPMTA. Composition is skewed to low complexity over residues 824 to 857, 865 to 874, and 891 to 901; these read PPSQ…LLQH, GLPSQPSQGQ, and QLPASQSALQP. The segment covering 902-932 has biased composition (pro residues); that stretch reads QQPPREQPLPPAPLAMPHIKPPPTTPIPQLP. A compositionally biased stretch (low complexity) spans 962–972; it reads KPLSSLSTHHP. Positions 1012-1023 are enriched in polar residues; the sequence is HPTTGLHQVPSQ. Positions 1027–1053 are enriched in pro residues; the sequence is PQHPFVPGGPPPITPPSCPPTSTPPAG. Low complexity predominate over residues 1054 to 1077; it reads PSSSSQPPCSAAVSSGGSVPGAPS. A phosphoserine mark is found at serine 1098, serine 1105, and serine 1107. The span at 1098 to 1109 shows a compositional bias: pro residues; the sequence is SPPPPPRSPSPE. At threonine 1111 the chain carries Phosphothreonine. Residues 1148–1203 are a coiled coil; that stretch reads GSKLAKKREEAIEKAKREAEQKAREEREREKEKEKEREREREREREAERAAKASSS. Residue lysine 1150 is modified to N6-acetyllysine. A compositionally biased stretch (basic and acidic residues) spans 1154–1198; it reads KREEAIEKAKREAEQKAREEREREKEKEKEREREREREREAERAA. Positions 1154–1238 are disordered; sequence KREEAIEKAK…TTIAAVPPYI (85 aa). Phosphotyrosine is present on tyrosine 1251. Serine 1258 is modified (phosphoserine).

Interacts with HDAC1 and ATN1. Interaction with ATN1 is improved when the poly-Gln region of ATN1 is extended. Interacts with FAT1.

The protein resides in the nucleus. Its subcellular location is the PML body. In terms of biological role, plays a role as a transcriptional repressor during development. May play a role in the control of cell survival. This is Arginine-glutamic acid dipeptide repeats protein (Rere) from Mus musculus (Mouse).